We begin with the raw amino-acid sequence, 115 residues long: Large ribosomal subunit protein bL19 (115 aa).

It belongs to the bacterial ribosomal protein bL19 family.

This protein is located at the 30S-50S ribosomal subunit interface and may play a role in the structure and function of the aminoacyl-tRNA binding site. This chain is Large ribosomal subunit protein bL19, found in Finegoldia magna (strain ATCC 29328 / DSM 20472 / WAL 2508) (Peptostreptococcus magnus).